Consider the following 236-residue polypeptide: Transcription repressor MYB6 (236 aa).

2 HTH myb-type domains span residues 9-61 and 62-116; these read KAHT…INYL and RPDL…KRKL. 2 consecutive DNA-binding regions (H-T-H motif) follow at residues 37–61 and 89–112; these read WRSL…INYL and WSLI…NTHI. The interval 159–181 is disordered; it reads PKTENSSDNGASTSGTTTDEDLR. A compositionally biased stretch (polar residues) spans 162–175; it reads ENSSDNGASTSGTT.

As to quaternary structure, interacts with BHLH012/MYC1 and BHLH042/TT8. In terms of tissue distribution, expressed in roots, stems, flower buds, and siliques.

It is found in the nucleus. This Arabidopsis thaliana (Mouse-ear cress) protein is Transcription repressor MYB6 (MYB6).